The sequence spans 157 residues: Protein Smg homolog (157 aa).

Belongs to the Smg family.

The polypeptide is Protein Smg homolog (Photobacterium profundum (strain SS9)).